A 232-amino-acid chain; its full sequence is Large ribosomal subunit protein uL1 (232 aa).

It belongs to the universal ribosomal protein uL1 family. As to quaternary structure, part of the 50S ribosomal subunit.

Its function is as follows. Binds directly to 23S rRNA. The L1 stalk is quite mobile in the ribosome, and is involved in E site tRNA release. In terms of biological role, protein L1 is also a translational repressor protein, it controls the translation of the L11 operon by binding to its mRNA. The protein is Large ribosomal subunit protein uL1 of Parabacteroides distasonis (strain ATCC 8503 / DSM 20701 / CIP 104284 / JCM 5825 / NCTC 11152).